Reading from the N-terminus, the 112-residue chain is Small ribosomal subunit protein bS6 (112 aa).

This sequence belongs to the bacterial ribosomal protein bS6 family.

Its function is as follows. Binds together with bS18 to 16S ribosomal RNA. The protein is Small ribosomal subunit protein bS6 of Hyphomonas neptunium (strain ATCC 15444).